The following is a 186-amino-acid chain: Translation initiation factor IF-3 (186 aa).

Residues 1 to 20 (MINRNSGKDRDRSRSGDKEL) form a disordered region.

The protein belongs to the IF-3 family. Monomer.

It is found in the cytoplasm. IF-3 binds to the 30S ribosomal subunit and shifts the equilibrium between 70S ribosomes and their 50S and 30S subunits in favor of the free subunits, thus enhancing the availability of 30S subunits on which protein synthesis initiation begins. In Borrelia duttonii (strain Ly), this protein is Translation initiation factor IF-3.